The chain runs to 123 residues: Large ribosomal subunit protein bL12 (123 aa).

This sequence belongs to the bacterial ribosomal protein bL12 family. Homodimer. Part of the ribosomal stalk of the 50S ribosomal subunit. Forms a multimeric L10(L12)X complex, where L10 forms an elongated spine to which 2 to 4 L12 dimers bind in a sequential fashion. Binds GTP-bound translation factors.

In terms of biological role, forms part of the ribosomal stalk which helps the ribosome interact with GTP-bound translation factors. Is thus essential for accurate translation. The protein is Large ribosomal subunit protein bL12 of Mycoplasmopsis synoviae (strain 53) (Mycoplasma synoviae).